Consider the following 90-residue polypeptide: MSVKIRMRRMGAKRKPFYRIVVADSRAPRDGRFIEEVGYYNPVSQPKELKLDEDKIFEWLKKGAQPSDTVRSFLSSAGLMAKLHDEKYNK.

This sequence belongs to the bacterial ribosomal protein bS16 family.

In Lactobacillus delbrueckii subsp. bulgaricus (strain ATCC 11842 / DSM 20081 / BCRC 10696 / JCM 1002 / NBRC 13953 / NCIMB 11778 / NCTC 12712 / WDCM 00102 / Lb 14), this protein is Small ribosomal subunit protein bS16.